Here is a 102-residue protein sequence, read N- to C-terminus: Large ribosomal subunit protein bL21 (102 aa).

The protein belongs to the bacterial ribosomal protein bL21 family. Part of the 50S ribosomal subunit. Contacts protein L20.

Functionally, this protein binds to 23S rRNA in the presence of protein L20. In Ehrlichia chaffeensis (strain ATCC CRL-10679 / Arkansas), this protein is Large ribosomal subunit protein bL21.